Consider the following 394-residue polypeptide: Protein TsgA homolog (394 aa).

12 helical membrane passes run 11-31 (WISYLSYALTGALVIVTGIVM), 51-71 (FLNAGILISIFLNAWLMEIIP), 76-96 (LVFGFILMLIAIAGLMVGHNL), 101-121 (ISMFIFGVVSGITMSIGTFLV), 134-154 (LLFTDSFFSMAGMIFPIAAAM), 162-182 (WYWVYACIGLLYVGIFVLTLC), 206-226 (VGVLFLAIAALCYILGQLGFI), 246-266 (QLVSNFWISYMIGMWIFSFIL), 274-294 (IVTVLAAMATLAMYLFVSTDN), 302-322 (ILALGFVSSAIYTTLITLGSL), 334-354 (FILTCGTVGTMLTFVVTGPIV), and 363-383 (LETANGLYLAVFILCLALGFF).

This sequence belongs to the major facilitator superfamily. TsgA family.

The protein resides in the cell inner membrane. In Yersinia pestis bv. Antiqua (strain Antiqua), this protein is Protein TsgA homolog.